Here is an 81-residue protein sequence, read N- to C-terminus: ATP synthase subunit c, chloroplastic (81 aa).

Helical transmembrane passes span 3–23 and 53–73; these read PLIS…ASIG and LLLS…VALA.

Belongs to the ATPase C chain family. F-type ATPases have 2 components, F(1) - the catalytic core - and F(0) - the membrane proton channel. F(1) has five subunits: alpha(3), beta(3), gamma(1), delta(1), epsilon(1). F(0) has four main subunits: a(1), b(1), b'(1) and c(10-14). The alpha and beta chains form an alternating ring which encloses part of the gamma chain. F(1) is attached to F(0) by a central stalk formed by the gamma and epsilon chains, while a peripheral stalk is formed by the delta, b and b' chains.

Its subcellular location is the plastid. It is found in the chloroplast thylakoid membrane. Its function is as follows. F(1)F(0) ATP synthase produces ATP from ADP in the presence of a proton or sodium gradient. F-type ATPases consist of two structural domains, F(1) containing the extramembraneous catalytic core and F(0) containing the membrane proton channel, linked together by a central stalk and a peripheral stalk. During catalysis, ATP synthesis in the catalytic domain of F(1) is coupled via a rotary mechanism of the central stalk subunits to proton translocation. Key component of the F(0) channel; it plays a direct role in translocation across the membrane. A homomeric c-ring of between 10-14 subunits forms the central stalk rotor element with the F(1) delta and epsilon subunits. This Huperzia lucidula (Shining clubmoss) protein is ATP synthase subunit c, chloroplastic.